We begin with the raw amino-acid sequence, 174 residues long: Actin-related protein 2/3 complex subunit 3 (174 aa).

It belongs to the ARPC3 family. In terms of assembly, component of the Arp2/3 complex composed of arp2, act2, arc1/p41-ARC, arc2/p34-ARC, arc3/p21-ARC, arc4/p20-ARC and arc5/p16-ARC.

The protein localises to the cytoplasm. The protein resides in the cytoskeleton. Its subcellular location is the actin patch. In terms of biological role, functions as a component of the Arp2/3 complex which is involved in regulation of actin polymerization and together with an activating nucleation-promoting factor (NPF) mediates the formation of branched actin networks. This is Actin-related protein 2/3 complex subunit 3 (arc3) from Schizosaccharomyces pombe (strain 972 / ATCC 24843) (Fission yeast).